The sequence spans 101 residues: NAD(P)H-quinone oxidoreductase subunit 4L, chloroplastic (101 aa).

Transmembrane regions (helical) follow at residues Leu2–Ile22, Met32–Phe52, and Ile61–Val81.

The protein belongs to the complex I subunit 4L family. As to quaternary structure, NDH is composed of at least 16 different subunits, 5 of which are encoded in the nucleus.

It is found in the plastid. The protein resides in the chloroplast thylakoid membrane. It catalyses the reaction a plastoquinone + NADH + (n+1) H(+)(in) = a plastoquinol + NAD(+) + n H(+)(out). The enzyme catalyses a plastoquinone + NADPH + (n+1) H(+)(in) = a plastoquinol + NADP(+) + n H(+)(out). NDH shuttles electrons from NAD(P)H:plastoquinone, via FMN and iron-sulfur (Fe-S) centers, to quinones in the photosynthetic chain and possibly in a chloroplast respiratory chain. The immediate electron acceptor for the enzyme in this species is believed to be plastoquinone. Couples the redox reaction to proton translocation, and thus conserves the redox energy in a proton gradient. This Carica papaya (Papaya) protein is NAD(P)H-quinone oxidoreductase subunit 4L, chloroplastic.